The sequence spans 1024 residues: Beta-galactosidase (1024 aa).

Positions 103 and 202 each coordinate substrate. D202 is a Na(+) binding site. Mg(2+)-binding residues include E417, H419, and E462. Substrate is bound by residues E462 and 538–541 (EYAH). E462 (proton donor) is an active-site residue. The Nucleophile role is filled by E538. Residue N598 participates in Mg(2+) binding. Residues F602 and N605 each coordinate Na(+). Residues N605 and W1000 each coordinate substrate.

The protein belongs to the glycosyl hydrolase 2 family. As to quaternary structure, homotetramer. It depends on Mg(2+) as a cofactor. Requires Na(+) as cofactor.

The enzyme catalyses Hydrolysis of terminal non-reducing beta-D-galactose residues in beta-D-galactosides.. The chain is Beta-galactosidase from Escherichia coli (strain ATCC 8739 / DSM 1576 / NBRC 3972 / NCIMB 8545 / WDCM 00012 / Crooks).